The following is a 203-amino-acid chain: uncharacterized protein (203 aa).

The disordered stretch occupies residues 1-23; sequence MGSSFVIDRSSSSPAPPRGPAPK.

This is an uncharacterized protein from Saccharomyces cerevisiae (strain ATCC 204508 / S288c) (Baker's yeast).